Consider the following 969-residue polypeptide: RNA polymerase-associated protein RapA (969 aa).

Residues 164 to 334 (EVGRRHAPRV…FARLRLLDPD (171 aa)) form the Helicase ATP-binding domain. 177 to 184 (DEVGLGKT) contributes to the ATP binding site. The DEAH box motif lies at 280 to 283 (DEAH). Positions 492–646 (RVNWLLEKVK…TCPTGRAVYD (155 aa)) constitute a Helicase C-terminal domain.

Belongs to the SNF2/RAD54 helicase family. RapA subfamily. Interacts with the RNAP. Has a higher affinity for the core RNAP than for the holoenzyme. Its ATPase activity is stimulated by binding to RNAP.

In terms of biological role, transcription regulator that activates transcription by stimulating RNA polymerase (RNAP) recycling in case of stress conditions such as supercoiled DNA or high salt concentrations. Probably acts by releasing the RNAP, when it is trapped or immobilized on tightly supercoiled DNA. Does not activate transcription on linear DNA. Probably not involved in DNA repair. The chain is RNA polymerase-associated protein RapA from Vibrio campbellii (strain ATCC BAA-1116).